The chain runs to 209 residues: Uracil phosphoribosyltransferase (209 aa).

5-phospho-alpha-D-ribose 1-diphosphate is bound by residues arginine 79, arginine 104, and 131–139 (DPMLATGGS). Uracil is bound by residues isoleucine 194 and 199 to 201 (GDA). Aspartate 200 contributes to the 5-phospho-alpha-D-ribose 1-diphosphate binding site.

Belongs to the UPRTase family. Requires Mg(2+) as cofactor.

The enzyme catalyses UMP + diphosphate = 5-phospho-alpha-D-ribose 1-diphosphate + uracil. It participates in pyrimidine metabolism; UMP biosynthesis via salvage pathway; UMP from uracil: step 1/1. Its activity is regulated as follows. Allosterically activated by GTP. Its function is as follows. Catalyzes the conversion of uracil and 5-phospho-alpha-D-ribose 1-diphosphate (PRPP) to UMP and diphosphate. This chain is Uracil phosphoribosyltransferase, found in Geobacter sp. (strain M21).